The primary structure comprises 273 residues: 4-hydroxy-tetrahydrodipicolinate reductase 1 (273 aa).

NAD(+) is bound by residues 13–18 (GAAGRM) and glutamate 39. An NADP(+)-binding site is contributed by arginine 40. Residues 103–105 (GTT) and 127–130 (SGNM) contribute to the NAD(+) site. The active-site Proton donor/acceptor is the histidine 161. Histidine 162 provides a ligand contact to (S)-2,3,4,5-tetrahydrodipicolinate. Lysine 165 serves as the catalytic Proton donor. 171–172 (GT) is a (S)-2,3,4,5-tetrahydrodipicolinate binding site.

Belongs to the DapB family.

It localises to the cytoplasm. The catalysed reaction is (S)-2,3,4,5-tetrahydrodipicolinate + NAD(+) + H2O = (2S,4S)-4-hydroxy-2,3,4,5-tetrahydrodipicolinate + NADH + H(+). It catalyses the reaction (S)-2,3,4,5-tetrahydrodipicolinate + NADP(+) + H2O = (2S,4S)-4-hydroxy-2,3,4,5-tetrahydrodipicolinate + NADPH + H(+). The protein operates within amino-acid biosynthesis; L-lysine biosynthesis via DAP pathway; (S)-tetrahydrodipicolinate from L-aspartate: step 4/4. Functionally, catalyzes the conversion of 4-hydroxy-tetrahydrodipicolinate (HTPA) to tetrahydrodipicolinate. The protein is 4-hydroxy-tetrahydrodipicolinate reductase 1 of Mesorhizobium japonicum (strain LMG 29417 / CECT 9101 / MAFF 303099) (Mesorhizobium loti (strain MAFF 303099)).